We begin with the raw amino-acid sequence, 618 residues long: GMC oxidoreductase family protein Mala s 12 (618 aa).

Residues 1–23 (MKGIVSWAVVSAALVLSATESLA) form the signal peptide. FAD-binding residues include V129 and V280. H556 serves as the catalytic Proton donor. H599 serves as the catalytic Proton acceptor.

It belongs to the GMC oxidoreductase family. In terms of assembly, monomer. It depends on FAD as a cofactor.

Its subcellular location is the secreted. This chain is GMC oxidoreductase family protein Mala s 12, found in Malassezia sympodialis (strain ATCC 42132) (Atopic eczema-associated yeast).